The primary structure comprises 878 residues: Phosphoenolpyruvate carboxylase (878 aa).

Residues His-137 and Lys-545 contribute to the active site.

It belongs to the PEPCase type 1 family. The cofactor is Mg(2+).

It carries out the reaction oxaloacetate + phosphate = phosphoenolpyruvate + hydrogencarbonate. Functionally, forms oxaloacetate, a four-carbon dicarboxylic acid source for the tricarboxylic acid cycle. In Serratia proteamaculans (strain 568), this protein is Phosphoenolpyruvate carboxylase.